Here is a 436-residue protein sequence, read N- to C-terminus: UBX domain-containing protein 7 (436 aa).

Residue lysine 19 forms a Glycyl lysine isopeptide (Lys-Gly) (interchain with G-Cter in ubiquitin) linkage. Residues 115–141 (AGESSSRETNPGLAREEKSSRDVHRKN) are disordered. The UBX domain occupies 212 to 290 (LHSSKCVLQI…ELTPRSALLL (79 aa)). Positions 325–346 (DKDPEVTSQREETSKPNRHEVR) are enriched in basic and acidic residues. Disordered regions lie at residues 325–357 (DKDP…AASS) and 371–436 (SSAH…EDKK). Low complexity predominate over residues 347 to 357 (SSTPLSGAASS). Residues 371–408 (SSAHASPMLTPSGTRYPSETNLTTSRSVSPNVFQFVNN) are compositionally biased toward polar residues. Serine 388 is subject to Phosphoserine. Over residues 426 to 436 (HLEKKKDEDKK) the composition is skewed to basic and acidic residues.

As to quaternary structure, interacts with CDC48.

It localises to the endoplasmic reticulum. Functionally, involved in CDC48-dependent protein degradation through the ubiquitin/proteasome pathway. In Saccharomyces cerevisiae (strain ATCC 204508 / S288c) (Baker's yeast), this protein is UBX domain-containing protein 7 (UBX7).